Here is a 348-residue protein sequence, read N- to C-terminus: Oxidase ucsJ (348 aa).

It belongs to the avfA family.

It functions in the pathway mycotoxin biosynthesis. Oxidase; part of the gene cluster that mediates the biosynthesis of UCS1025A, a member of the pyrrolizidinone family that acts as a strong telomerase inhibitor and displays potent antibacterial and antitumor properties. These compounds share a hemiaminal-containing pyrrolizidinone core fused with a gamma-lactone, giving a furopyrrolizidine that is connected to a decalin fragment. The polyketide synthase module (PKS) of the PKS-NRPS ucsA is responsible for the synthesis of the polyketide backbone via the condensation of an acetyl-CoA starter unit with 6 malonyl-CoA units. The downstream nonribosomal peptide synthetase (NRPS) module then amidates the carboxyl end of the polyketide with a 2S,3S-methylproline derived from L-isoleucine by the 2-oxoglutarate-dependent dioxygenase ucsF which converts L-isoleucine to (4S,5S)-4-methylpyrroline-5-carboxylate that is further converted to 2S,3S-methylproline by the pyrroline-5-carboxylate reductase ucsG. Reductive release of the completed aminoacyl polyketide from the assembly line can form the 3-pyrrolin-2-one structure via an intramolecular Knoevenagel reaction. Because ucsA lacks a designated enoylreductase (ER) domain, the required activity is provided the enoyl reductase ucsL. This keto acyclic precursor is the substrate of the Diels-Alderase ucsH, that catalyzes the Diels-Alder cycloaddition. Oxidation of the 3S-methyl group to a carboxylate by the cytochrome P450 monooxygenase ucsK allows an oxa-Michael cyclization that might involve the reductase/dehydrogenase ucsI and which furnishes the furopyrrolizidine. The oxidase ucsJ likely plays a critical role in stereoselective reduction of the C5-C6 double bond to afford the required R-configured carboxylate group. Further enolization and oxidation at C5 by an unidentified enzyme affords the last intermediate that can undergo oxa-Michael cyclization to yield UCS1025A. This Acremonium sp protein is Oxidase ucsJ.